The following is a 430-amino-acid chain: Trigger factor (430 aa).

The region spanning 157–242 (GDLVALETWS…AVEVSEPVLP (86 aa)) is the PPIase FKBP-type domain.

This sequence belongs to the FKBP-type PPIase family. Tig subfamily.

The protein resides in the cytoplasm. It catalyses the reaction [protein]-peptidylproline (omega=180) = [protein]-peptidylproline (omega=0). Involved in protein export. Acts as a chaperone by maintaining the newly synthesized protein in an open conformation. Functions as a peptidyl-prolyl cis-trans isomerase. This chain is Trigger factor, found in Xanthomonas oryzae pv. oryzae (strain MAFF 311018).